The chain runs to 423 residues: Polyglutamylase complex subunit TTLL1 (423 aa).

In terms of domain architecture, TTL spans 1–367; it reads MAGKVKWVTD…NGEIPDCKWN (367 aa). ATP is bound by residues K138, 144-145, 181-184, and 194-196; these read QG, SLYI, and KFD. Q144 is a binding site for a protein. R220 serves as a coordination point for L-glutamate. An ATP-binding site is contributed by 241 to 242; the sequence is TN. Residue K259 coordinates L-glutamate. Mg(2+) contacts are provided by D313, E326, and N328. Position 344 (K344) interacts with L-glutamate. Residues 391-423 form a disordered region; the sequence is GAERELRSRPGQSLGPKGSRLRDAGRTVLTTWK.

The protein belongs to the tubulin polyglutamylase family. Part of the neuronal tubulin polyglutamylase complex which contains TPGS1, TPGS2, TTLL1, LRRC49 and NICN1. Interacts with PCM1, CSTPP1 and LRRC49. Mg(2+) serves as cofactor.

Its subcellular location is the cytoplasm. The protein resides in the cytoskeleton. It is found in the cilium basal body. The protein localises to the cilium axoneme. It localises to the cell projection. Its subcellular location is the cilium. The protein resides in the flagellum. The enzyme catalyses (L-glutamyl)(n)-gamma-L-glutamyl-L-glutamyl-[protein] + L-glutamate + ATP = (L-glutamyl)(n+1)-gamma-L-glutamyl-L-glutamyl-[protein] + ADP + phosphate + H(+). In terms of biological role, catalytic subunit of a polyglutamylase complex which modifies tubulin, generating side chains of glutamate on the gamma-carboxyl group of specific glutamate residues within the C-terminal tail of tubulin. Probably involved in the side-chain elongation step of the polyglutamylation reaction rather than the initiation step. Modifies both alpha- and beta-tubulins with a preference for the alpha-tail. Unlike most polyglutamylases of the tubulin--tyrosine ligase family, only displays a catalytic activity when in complex with other proteins as it is most likely lacking domains important for autonomous activity. Part of the neuronal tubulin polyglutamylase complex. Mediates cilia and flagella polyglutamylation which is essential for their biogenesis and motility. Involved in respiratory motile cilia function through the regulation of beating asymmetry. Essential for sperm flagella biogenesis, motility and male fertility. Involved in KLF4 glutamylation which impedes its ubiquitination, thereby leading to somatic cell reprogramming, pluripotency maintenance and embryogenesis. In Bos taurus (Bovine), this protein is Polyglutamylase complex subunit TTLL1 (TTLL1).